Reading from the N-terminus, the 212-residue chain is Ion-translocating oxidoreductase complex subunit G (212 aa).

Residues 9–29 (GLLLALFALLCTGLVAVVNQQ) traverse the membrane as a helical segment. FMN phosphoryl threonine is present on T176.

This sequence belongs to the RnfG family. As to quaternary structure, the complex is composed of six subunits: RnfA, RnfB, RnfC, RnfD, RnfE and RnfG. It depends on FMN as a cofactor.

It localises to the cell inner membrane. Functionally, part of a membrane-bound complex that couples electron transfer with translocation of ions across the membrane. The polypeptide is Ion-translocating oxidoreductase complex subunit G (Shewanella oneidensis (strain ATCC 700550 / JCM 31522 / CIP 106686 / LMG 19005 / NCIMB 14063 / MR-1)).